Reading from the N-terminus, the 193-residue chain is CASP-like protein 2U1 (193 aa).

Residues 1–18 lie on the Cytoplasmic side of the membrane; it reads MAMALALGGGQDAERKVK. The helical transmembrane segment at 19–39 threads the bilayer; it reads VAEVALRALLCGLGALAAALV. The Extracellular portion of the chain corresponds to 40–61; sequence ATDTQTRTFFSLQKKASYTDMK. A helical transmembrane segment spans residues 62 to 82; sequence AMVFLVDAAAVAAGYSLLQLA. Over 83-113 the chain is Cytoplasmic; it reads ARCCGGGAMSSGRGDGGGRGRALSWCVFSCD. The helical transmembrane segment at 114–134 threads the bilayer; the sequence is QALAYVLLAAVAAALQASVVA. The Extracellular segment spans residues 135 to 156; the sequence is KRGQPELQWMGICALYGAFCRQ. The helical transmembrane segment at 157–177 threads the bilayer; it reads AGAGLATAVVAGLAAVLLAFL. Residues 178 to 193 are Cytoplasmic-facing; that stretch reads SAFNLFRLYGSGGTKS.

Belongs to the Casparian strip membrane proteins (CASP) family. Homodimer and heterodimers.

The protein localises to the cell membrane. The sequence is that of CASP-like protein 2U1 from Sorghum bicolor (Sorghum).